A 362-amino-acid chain; its full sequence is Major capsid protein VP1 (362 aa).

A Bipartite nuclear localization signal motif is present at residues 5 to 19 (KRKGECPGAAPKKPK). Thr-338 is subject to Phosphothreonine; by host.

This sequence belongs to the polyomaviruses coat protein VP1 family. Homomultimer; disulfide-linked. The virus capsid is composed of 72 icosahedral units, each one composed of five disulfide-linked copies of VP1. Interacts with minor capsid proteins VP2 and VP3.

It localises to the virion. It is found in the host nucleus. Forms an icosahedral capsid with a T=7 symmetry and a 40 nm diameter. The capsid is composed of 72 pentamers linked to each other by disulfide bonds and associated with VP2 or VP3 proteins. Interacts with sialic acids on the cell surface to provide virion attachment to target cell. Once attached, the virion is internalized by endocytosis and traffics to the endoplasmic reticulum. Inside the endoplasmic reticulum, the protein folding machinery isomerizes VP1 interpentamer disulfide bonds, thereby triggering initial uncoating. Next, the virion uses the endoplasmic reticulum-associated degradation machinery to probably translocate in the cytosol before reaching the nucleus. Nuclear entry of the viral DNA involves the selective exposure and importin recognition of VP2/Vp3 nuclear localization signal. In late phase of infection, neo-synthesized VP1 encapsulates replicated genomic DNA in the nucleus, and participates in rearranging nucleosomes around the viral DNA. The protein is Major capsid protein VP1 of Simian virus 12 (strain wt100) (SV-12).